We begin with the raw amino-acid sequence, 660 residues long: Acetyl-coenzyme A synthetase (660 aa).

CoA-binding positions include arginine 197–lysine 200 and threonine 317. ATP-binding positions include glycine 397–proline 399, aspartate 421–threonine 426, aspartate 512, and arginine 528. Serine 536 lines the CoA pocket. An ATP-binding site is contributed by arginine 539. 2 residues coordinate Mg(2+): valine 550 and valine 555. Lysine 625 carries the N6-acetyllysine modification.

This sequence belongs to the ATP-dependent AMP-binding enzyme family. Mg(2+) serves as cofactor. In terms of processing, acetylated. Deacetylation by the SIR2-homolog deacetylase activates the enzyme.

It catalyses the reaction acetate + ATP + CoA = acetyl-CoA + AMP + diphosphate. Its function is as follows. Catalyzes the conversion of acetate into acetyl-CoA (AcCoA), an essential intermediate at the junction of anabolic and catabolic pathways. AcsA undergoes a two-step reaction. In the first half reaction, AcsA combines acetate with ATP to form acetyl-adenylate (AcAMP) intermediate. In the second half reaction, it can then transfer the acetyl group from AcAMP to the sulfhydryl group of CoA, forming the product AcCoA. In Cupriavidus pinatubonensis (strain JMP 134 / LMG 1197) (Cupriavidus necator (strain JMP 134)), this protein is Acetyl-coenzyme A synthetase.